Consider the following 224-residue polypeptide: Inhibitor of apoptosis protein (224 aa).

Residues 29 to 92 form a BIR repeat; sequence IDARNQSFAI…GFWSRNCGFM (64 aa). Zn(2+) contacts are provided by Cys62, Cys65, His82, and Cys89.

This sequence belongs to the asfivirus IAP family. In terms of assembly, interacts with subunit p17 of host CASP3.

Its subcellular location is the host cytoplasm. It localises to the virion. In terms of biological role, prevent apoptosis of host cell by inhibiting caspase-3/CASP3 activation to promote the viral replication. Also induces the activation of host NF-kappaB. In African swine fever virus (isolate Pig/Haiti/H811/1981) (ASFV), this protein is Inhibitor of apoptosis protein (p27).